The chain runs to 262 residues: MLYHLNNNGVSEVVGALLTVVVIVTAAGIIYVISHPVIANSIDNVNYQNAVKNMAEIKEIVQRMKYGSEVATSKVIQLNGGSMSNARFFNFTVFTTELPPGLQGNPNPNINAIIHAAHDIEVDWYTHTLNIEIAGREIVFESGIFVKEYGSVNPIPISEPDIIVTNDTLYLSIYDFIGDYSAGGQKITINFKHNFTTIFSNVTSFELKSEFCDIWKKSFEKALNDVPSKPADFEDDDCIDNTIKIKKASGDISIIFTRVEVT.

The helical transmembrane segment at 13–35 (VVGALLTVVVIVTAAGIIYVISH) threads the bilayer.

The protein resides in the membrane. This is an uncharacterized protein from Archaeoglobus fulgidus (strain ATCC 49558 / DSM 4304 / JCM 9628 / NBRC 100126 / VC-16).